Reading from the N-terminus, the 83-residue chain is Cytochrome b559 subunit alpha (83 aa).

Residues 21–35 form a helical membrane-spanning segment; it reads VIHSITIPSLFIAGW. H23 lines the heme pocket.

Belongs to the PsbE/PsbF family. As to quaternary structure, heterodimer of an alpha subunit and a beta subunit. PSII is composed of 1 copy each of membrane proteins PsbA, PsbB, PsbC, PsbD, PsbE, PsbF, PsbH, PsbI, PsbJ, PsbK, PsbL, PsbM, PsbT, PsbX, PsbY, PsbZ, Psb30/Ycf12, at least 3 peripheral proteins of the oxygen-evolving complex and a large number of cofactors. It forms dimeric complexes. Heme b is required as a cofactor.

Its subcellular location is the plastid. It is found in the chloroplast thylakoid membrane. In terms of biological role, this b-type cytochrome is tightly associated with the reaction center of photosystem II (PSII). PSII is a light-driven water:plastoquinone oxidoreductase that uses light energy to abstract electrons from H(2)O, generating O(2) and a proton gradient subsequently used for ATP formation. It consists of a core antenna complex that captures photons, and an electron transfer chain that converts photonic excitation into a charge separation. The polypeptide is Cytochrome b559 subunit alpha (Marchantia polymorpha (Common liverwort)).